The sequence spans 217 residues: Peptide deformylase (217 aa).

Fe cation-binding residues include Cys91 and His133. Glu134 is an active-site residue. His137 provides a ligand contact to Fe cation. The segment at Val153–Glu217 is disordered. Positions Glu155–Gly176 are enriched in acidic residues. The span at Ala177–Ala192 shows a compositional bias: low complexity. Residues Gly206–Glu217 are compositionally biased toward basic and acidic residues.

It belongs to the polypeptide deformylase family. It depends on Fe(2+) as a cofactor.

The enzyme catalyses N-terminal N-formyl-L-methionyl-[peptide] + H2O = N-terminal L-methionyl-[peptide] + formate. In terms of biological role, removes the formyl group from the N-terminal Met of newly synthesized proteins. Requires at least a dipeptide for an efficient rate of reaction. N-terminal L-methionine is a prerequisite for activity but the enzyme has broad specificity at other positions. The protein is Peptide deformylase of Symbiobacterium thermophilum (strain DSM 24528 / JCM 14929 / IAM 14863 / T).